The primary structure comprises 613 residues: DNA mismatch repair protein MutL (613 aa).

The disordered stretch occupies residues 364–393; the sequence is EPAVARQPEAPRYSSGASAPRPTGANYPHA.

The protein belongs to the DNA mismatch repair MutL/HexB family.

This protein is involved in the repair of mismatches in DNA. It is required for dam-dependent methyl-directed DNA mismatch repair. May act as a 'molecular matchmaker', a protein that promotes the formation of a stable complex between two or more DNA-binding proteins in an ATP-dependent manner without itself being part of a final effector complex. The protein is DNA mismatch repair protein MutL of Enterobacter sp. (strain 638).